The primary structure comprises 348 residues: Serpentine receptor class alpha-29 (348 aa).

The next 6 membrane-spanning stretches (helical) occupy residues 28–48 (FILMIIVVSFITTALAVQTLW), 108–130 (FLYYQTALFSSFYCVSLFLDRLF), 145–165 (GFIVFLILQIICPIAIQFWTF), 193–213 (INDSRIIIMGTIFMCSLFLYI), 246–266 (CIIIFSQITCLGITSFVPSIF), and 280–300 (LILAFMAGATYSNFFLPLIVI).

Belongs to the nematode receptor-like protein sra family.

It localises to the membrane. In Caenorhabditis elegans, this protein is Serpentine receptor class alpha-29 (sra-29).